We begin with the raw amino-acid sequence, 215 residues long: 3-isopropylmalate dehydratase small subunit (215 aa).

Belongs to the LeuD family. LeuD type 1 subfamily. As to quaternary structure, heterodimer of LeuC and LeuD.

It catalyses the reaction (2R,3S)-3-isopropylmalate = (2S)-2-isopropylmalate. It functions in the pathway amino-acid biosynthesis; L-leucine biosynthesis; L-leucine from 3-methyl-2-oxobutanoate: step 2/4. Functionally, catalyzes the isomerization between 2-isopropylmalate and 3-isopropylmalate, via the formation of 2-isopropylmaleate. This is 3-isopropylmalate dehydratase small subunit from Polynucleobacter asymbioticus (strain DSM 18221 / CIP 109841 / QLW-P1DMWA-1) (Polynucleobacter necessarius subsp. asymbioticus).